The primary structure comprises 569 residues: Laccase-14 (569 aa).

Residues 1–33 (MEFKLNIPNTIIKTLQTIVFFLFVLLAFQIAEA) form the signal peptide. Plastocyanin-like domains lie at 41–157 (KIKS…PKRG) and 167–320 (REIP…YKGD). N-linked (GlcNAc...) asparagine glycosylation occurs at Asn-87. Residues His-91, His-93, His-136, and His-138 each contribute to the Cu cation site. N-linked (GlcNAc...) asparagine glycosylation is found at Asn-190, Asn-249, Asn-336, Asn-374, Asn-395, Asn-430, and Asn-452. The Plastocyanin-like 3 domain occupies 420–553 (DFPRNPPTKF…NTVFIVKDGP (134 aa)). The Cu cation site is built by His-470, His-473, His-475, His-532, Cys-533, His-534, His-538, and Met-543.

It belongs to the multicopper oxidase family. Requires Cu cation as cofactor. As to expression, expressed at low levels in flowers and siliques.

It is found in the secreted. The protein resides in the extracellular space. The protein localises to the apoplast. The catalysed reaction is 4 hydroquinone + O2 = 4 benzosemiquinone + 2 H2O. Its function is as follows. Lignin degradation and detoxification of lignin-derived products. The polypeptide is Laccase-14 (LAC14) (Arabidopsis thaliana (Mouse-ear cress)).